We begin with the raw amino-acid sequence, 142 residues long: uncharacterized protein (142 aa).

The next 3 membrane-spanning stretches (helical) occupy residues Leu-3–Leu-23, Ser-30–Ile-50, and Phe-91–Ser-111.

It localises to the membrane. This is an uncharacterized protein from Saccharomyces cerevisiae (strain ATCC 204508 / S288c) (Baker's yeast).